Here is a 513-residue protein sequence, read N- to C-terminus: Probable hydrolase YhcX (513 aa).

Residues 14–212 (MVIRNIEEKD…YATLMEWNNV (199 aa)) form the N-acetyltransferase domain. The CN hydrolase domain maps to 229-484 (VRICVIQYEM…EMVVIGDVDL (256 aa)). Glu270 (proton acceptor) is an active-site residue. Residue Lys345 is the Proton donor of the active site. Catalysis depends on Cys379, which acts as the Nucleophile.

The protein belongs to the carbon-nitrogen hydrolase superfamily. NIT1/NIT2 family.

The sequence is that of Probable hydrolase YhcX (yhcX) from Bacillus subtilis (strain 168).